The sequence spans 512 residues: 2,3-bisphosphoglycerate-independent phosphoglycerate mutase (512 aa).

Mn(2+)-binding residues include Asp-14 and Ser-64. Ser-64 functions as the Phosphoserine intermediate in the catalytic mechanism. Substrate contacts are provided by residues His-125, 155–156 (RD), Arg-187, Arg-193, 259–262 (RADR), and Lys-332. Residues Asp-399, His-403, Asp-440, His-441, and His-459 each coordinate Mn(2+).

It belongs to the BPG-independent phosphoglycerate mutase family. In terms of assembly, monomer. Requires Mn(2+) as cofactor.

The catalysed reaction is (2R)-2-phosphoglycerate = (2R)-3-phosphoglycerate. It participates in carbohydrate degradation; glycolysis; pyruvate from D-glyceraldehyde 3-phosphate: step 3/5. Its function is as follows. Catalyzes the interconversion of 2-phosphoglycerate and 3-phosphoglycerate. The polypeptide is 2,3-bisphosphoglycerate-independent phosphoglycerate mutase (Ruthia magnifica subsp. Calyptogena magnifica).